The following is a 361-amino-acid chain: Diacylglycerol O-acyltransferase 2 (361 aa).

Residues 1 to 42 (MKTLIAAYSGVLRGTGSSILSALQDLFSVTWLNRAKVEKQLQ) lie on the Cytoplasmic side of the membrane. Residues 43-61 (VISVLQWVLSFLVLGVACS) traverse the membrane as a helical segment. Topologically, residues 62 to 65 (VILM) are lumenal. The chain crosses the membrane as a helical span at residues 66 to 85 (YTFCTDCWLIAVLYFTWLVF). The Cytoplasmic portion of the chain corresponds to 86-361 (DWNTPKKGGR…LPETEVLEVN (276 aa)).

This sequence belongs to the diacylglycerol acyltransferase family. In terms of assembly, forms multimeric complexes consisting of several DGAT2 subunits. Interacts with SLC27A1 and this interaction is enhanced in the presence of ZFYVE1.

The protein localises to the endoplasmic reticulum membrane. It is found in the lipid droplet. It localises to the cytoplasm. Its subcellular location is the perinuclear region. The enzyme catalyses an acyl-CoA + a 1,2-diacyl-sn-glycerol = a triacyl-sn-glycerol + CoA. The catalysed reaction is all-trans-retinol + an acyl-CoA = an all-trans-retinyl ester + CoA. It catalyses the reaction 2-(9Z-octadecenoyl)-glycerol + (9Z)-octadecenoyl-CoA = 1,2-di-(9Z-octadecenoyl)-sn-glycerol + CoA. It carries out the reaction 1,2-di-(9Z-octadecenoyl)-sn-glycerol + (9Z)-octadecenoyl-CoA = 1,2,3-tri-(9Z-octadecenoyl)-glycerol + CoA. The enzyme catalyses all-trans-retinol + hexadecanoyl-CoA = all-trans-retinyl hexadecanoate + CoA. The catalysed reaction is 1-O-(9Z-octadecenyl)-glycerol + (9Z)-octadecenoyl-CoA = 1-O-(9Z-octadecyl)-3-(9Z-octadecenoyl)-glycerol + CoA. It catalyses the reaction 1-(9Z-octadecenoyl)-glycerol + (9Z)-octadecenoyl-CoA = 1,2-di-(9Z-octadecenoyl)-glycerol + CoA. It carries out the reaction 1,2-di-(9Z-octadecenoyl)-sn-glycerol + hexadecanoyl-CoA = 1,2-di-(9Z)-octadecenoyl-3-hexadecanoyl-sn-glycerol + CoA. The enzyme catalyses 1,3-di-(9Z-octadecenoyl)-glycerol + (9Z)-octadecenoyl-CoA = 1,2,3-tri-(9Z-octadecenoyl)-glycerol + CoA. The catalysed reaction is 2,3-di-(9Z)-octadecenoyl-sn-glycerol + (9Z)-octadecenoyl-CoA = 1,2,3-tri-(9Z-octadecenoyl)-glycerol + CoA. It catalyses the reaction 2-(9Z-octadecenoyl)-glycerol + hexadecanoyl-CoA = 1-hexadecanoyl-2-(9Z-octadecenoyl)-sn-glycerol + CoA. It participates in glycerolipid metabolism; triacylglycerol biosynthesis. With respect to regulation, inhibited by niacin. Functionally, essential acyltransferase that catalyzes the terminal and only committed step in triacylglycerol synthesis by using diacylglycerol and fatty acyl CoA as substrates. Required for synthesis and storage of intracellular triglycerides. Probably plays a central role in cytosolic lipid accumulation. In liver, is primarily responsible for incorporating endogenously synthesized fatty acids into triglycerides. Also functions as an acyl-CoA retinol acyltransferase (ARAT). Also able to use 1-monoalkylglycerol (1-MAkG) as an acyl acceptor for the synthesis of monoalkyl-monoacylglycerol (MAMAG). The sequence is that of Diacylglycerol O-acyltransferase 2 (DGAT2) from Bos taurus (Bovine).